The following is a 303-amino-acid chain: Sulfate adenylyltransferase subunit 2 (303 aa).

The protein belongs to the PAPS reductase family. CysD subfamily. As to quaternary structure, heterodimer composed of CysD, the smaller subunit, and CysN.

It catalyses the reaction sulfate + ATP + H(+) = adenosine 5'-phosphosulfate + diphosphate. It participates in sulfur metabolism; hydrogen sulfide biosynthesis; sulfite from sulfate: step 1/3. In terms of biological role, with CysN forms the ATP sulfurylase (ATPS) that catalyzes the adenylation of sulfate producing adenosine 5'-phosphosulfate (APS) and diphosphate, the first enzymatic step in sulfur assimilation pathway. APS synthesis involves the formation of a high-energy phosphoric-sulfuric acid anhydride bond driven by GTP hydrolysis by CysN coupled to ATP hydrolysis by CysD. This Phocaeicola vulgatus (strain ATCC 8482 / DSM 1447 / JCM 5826 / CCUG 4940 / NBRC 14291 / NCTC 11154) (Bacteroides vulgatus) protein is Sulfate adenylyltransferase subunit 2.